The chain runs to 338 residues: Ketol-acid reductoisomerase (NADP(+)) (338 aa).

The KARI N-terminal Rossmann domain occupies 1-181; that stretch reads MKVFYDKDAD…GGGRAGIIET (181 aa). NADP(+) is bound by residues 24–27, Arg47, and Ser52; that span reads YGSQ. The active site involves His107. Gly133 is a binding site for NADP(+). The KARI C-terminal knotted domain maps to 182 to 327; that stretch reads NFREETETDL…AKLRSMMPWI (146 aa). The Mg(2+) site is built by Asp190, Glu194, Glu226, and Glu230. Ser251 serves as a coordination point for substrate.

The protein belongs to the ketol-acid reductoisomerase family. The cofactor is Mg(2+).

It catalyses the reaction (2R)-2,3-dihydroxy-3-methylbutanoate + NADP(+) = (2S)-2-acetolactate + NADPH + H(+). The catalysed reaction is (2R,3R)-2,3-dihydroxy-3-methylpentanoate + NADP(+) = (S)-2-ethyl-2-hydroxy-3-oxobutanoate + NADPH + H(+). It functions in the pathway amino-acid biosynthesis; L-isoleucine biosynthesis; L-isoleucine from 2-oxobutanoate: step 2/4. The protein operates within amino-acid biosynthesis; L-valine biosynthesis; L-valine from pyruvate: step 2/4. Its function is as follows. Involved in the biosynthesis of branched-chain amino acids (BCAA). Catalyzes an alkyl-migration followed by a ketol-acid reduction of (S)-2-acetolactate (S2AL) to yield (R)-2,3-dihydroxy-isovalerate. In the isomerase reaction, S2AL is rearranged via a Mg-dependent methyl migration to produce 3-hydroxy-3-methyl-2-ketobutyrate (HMKB). In the reductase reaction, this 2-ketoacid undergoes a metal-dependent reduction by NADPH to yield (R)-2,3-dihydroxy-isovalerate. The sequence is that of Ketol-acid reductoisomerase (NADP(+)) from Paraburkholderia phytofirmans (strain DSM 17436 / LMG 22146 / PsJN) (Burkholderia phytofirmans).